The chain runs to 390 residues: Dynein regulatory complex subunit 5 (390 aa).

LRR repeat units follow at residues 182-205, 210-233, and 238-261; these read TETL…MLAS, NLSI…ALAK, and HSVI…SLAR.

The protein belongs to the DRC5 family. Component of the nexin-dynein regulatory complex (N-DRC). Interacts with DRC1, DRC2, DRC3, DRC4, DRC7 and DRC11.

It localises to the cell projection. The protein localises to the cilium. It is found in the flagellum. Its subcellular location is the cytoplasm. The protein resides in the cytoskeleton. It localises to the flagellum axoneme. Its function is as follows. Component of the nexin-dynein regulatory complex (N-DRC) a key regulator of ciliary/flagellar motility which maintains the alignment and integrity of the distal axoneme and regulates microtubule sliding in motile axonemes. May play a role in the assembly of N-DRC. This is Dynein regulatory complex subunit 5 from Chlamydomonas reinhardtii (Chlamydomonas smithii).